A 914-amino-acid polypeptide reads, in one-letter code: Serine/threonine kinase SAD-1 (914 aa).

The Protein kinase domain occupies tyrosine 47–valine 298. Residues leucine 53–valine 61 and lysine 76 contribute to the ATP site. Residue aspartate 169 is the Proton acceptor of the active site. Disordered regions lie at residues alanine 375–serine 551, threonine 563–tryptophan 590, and asparagine 757–valine 914. Positions proline 393 to arginine 402 are enriched in basic and acidic residues. Residues arginine 444–arginine 462 are compositionally biased toward low complexity. Over residues alanine 473–tyrosine 482 the composition is skewed to polar residues. Positions alanine 495–lysine 526 are enriched in basic and acidic residues. Composition is skewed to low complexity over residues serine 527–serine 551 and threonine 563–serine 573. Residues leucine 574–tryptophan 590 show a composition bias toward polar residues. A compositionally biased stretch (low complexity) spans aspartate 780 to serine 796. Residues serine 823–serine 837 are compositionally biased toward polar residues. The span at alanine 850–serine 876 shows a compositional bias: low complexity. Positions serine 882 to phenylalanine 903 are enriched in polar residues.

Belongs to the protein kinase superfamily. CAMK Ser/Thr protein kinase family. SNF1 subfamily. Interacts with strd-1 and nab-1. Requires Mg(2+) as cofactor. In terms of tissue distribution, expressed in neurons. Colocalizes with strd-1 along the dorsal nerve cord.

The protein localises to the synapse. The catalysed reaction is L-seryl-[protein] + ATP = O-phospho-L-seryl-[protein] + ADP + H(+). It catalyses the reaction L-threonyl-[protein] + ATP = O-phospho-L-threonyl-[protein] + ADP + H(+). Functionally, regulates both neuronal polarity and synaptic organization when bound to strd-1. Kinase activity is required for the establishment, but not the maintenance, of both processes. Binding to nab-1 is essential for role in restricting axonal fate during neuronal polarization but is not required for regulating synapse morphology. The sequence is that of Serine/threonine kinase SAD-1 from Caenorhabditis elegans.